Here is a 491-residue protein sequence, read N- to C-terminus: Probable cytosol aminopeptidase (491 aa).

Lys264 and Asp269 together coordinate Mn(2+). Lys276 is an active-site residue. Asp287, Asp346, and Glu348 together coordinate Mn(2+). The active site involves Arg350.

Belongs to the peptidase M17 family. Requires Mn(2+) as cofactor.

The protein resides in the cytoplasm. It carries out the reaction Release of an N-terminal amino acid, Xaa-|-Yaa-, in which Xaa is preferably Leu, but may be other amino acids including Pro although not Arg or Lys, and Yaa may be Pro. Amino acid amides and methyl esters are also readily hydrolyzed, but rates on arylamides are exceedingly low.. The enzyme catalyses Release of an N-terminal amino acid, preferentially leucine, but not glutamic or aspartic acids.. Functionally, presumably involved in the processing and regular turnover of intracellular proteins. Catalyzes the removal of unsubstituted N-terminal amino acids from various peptides. The polypeptide is Probable cytosol aminopeptidase (Xylella fastidiosa (strain 9a5c)).